Reading from the N-terminus, the 567-residue chain is Organic cation transporter-like protein (567 aa).

The Cytoplasmic segment spans residues 1–21; the sequence is MGYDEAIIHLGDFGRYQKIIY. Residues 22–42 traverse the membrane as a helical segment; that stretch reads FLICLTSIPVAFHKLAGVFLL. Residues 43 to 127 lie on the Extracellular side of the membrane; it reads AKPDFRCALP…TEWNLVCGRD (85 aa). 4 N-linked (GlcNAc...) asparagine glycosylation sites follow: Asn-55, Asn-67, Asn-89, and Asn-97. Residues 128 to 148 form a helical membrane-spanning segment; it reads FMAATSDSLFMLGVLLGSIVF. Over 149 to 158 the chain is Cytoplasmic; sequence GQLSDKYGRK. Residues 159–179 form a helical membrane-spanning segment; the sequence is PILFASLVIQVLFGVLAGVAP. Over 180–189 the chain is Extracellular; it reads EYFTYTFARL. A helical membrane pass occupies residues 190 to 210; it reads MVGATTSGVFLVAYVVAMEMV. Residues 211 to 219 lie on the Cytoplasmic side of the membrane; it reads GPDKRLYAG. A helical transmembrane segment spans residues 220 to 240; it reads IFVMMFFSVGFMLTAVFAYFV. The Extracellular portion of the chain corresponds to 241–244; it reads HDWR. The chain crosses the membrane as a helical span at residues 245–265; the sequence is WLQIALTLPGLIFMFYYWIIP. The Cytoplasmic portion of the chain corresponds to 266 to 343; the sequence is ESARWLLLKG…LFCYPNLRRK (78 aa). The segment at 304-326 is disordered; it reads LDEGENSEEKAKQKLEDQELDEG. Residues 310–320 are compositionally biased toward basic and acidic residues; sequence SEEKAKQKLED. A helical transmembrane segment spans residues 344 to 364; that stretch reads TLLIFLDWLVTSGVYYGLSWN. Residues 365 to 371 are Extracellular-facing; it reads TSNLGGN. A helical transmembrane segment spans residues 372 to 392; sequence VLLNFVISGAVEIPAYIFLLL. Residues 393–400 lie on the Cytoplasmic side of the membrane; sequence TLNRWGRR. A helical membrane pass occupies residues 401 to 421; that stretch reads SILCGCLVMAGLSLLATVIIP. Over 422–427 the chain is Extracellular; the sequence is QRMHTL. Residues 428-448 traverse the membrane as a helical segment; sequence IVACAMLGKLAITASYGTVYI. Residues 449–462 lie on the Cytoplasmic side of the membrane; it reads FSAEQFPTVVRNVA. The helical transmembrane segment at 463–483 threads the bilayer; the sequence is LGAASMVARISGMMAPFLNFL. Topologically, residues 484 to 489 are extracellular; it reads ATIWKP. A helical membrane pass occupies residues 490 to 510; the sequence is LPLLICGSLTLVAGLLSLLLP. Topologically, residues 511 to 567 are cytoplasmic; the sequence is ETHNKPMLETIADGERFGKKTKADVYLETGQELRAPEAQPLKGSGETNGSTIANGHK. Residues 546–567 are disordered; sequence PEAQPLKGSGETNGSTIANGHK. Positions 555-567 are enriched in polar residues; that stretch reads GETNGSTIANGHK.

This sequence belongs to the major facilitator (TC 2.A.1) superfamily. Organic cation transporter (TC 2.A.1.19) family.

It is found in the membrane. Its function is as follows. Probably transports organic cations. This is Organic cation transporter-like protein (Orct2) from Drosophila melanogaster (Fruit fly).